A 444-amino-acid chain; its full sequence is Tubulin beta chain (444 aa).

8 residues coordinate GTP: glutamine 11, glutamate 69, serine 138, glycine 142, threonine 143, glycine 144, asparagine 204, and asparagine 226. Glutamate 69 is a Mg(2+) binding site.

It belongs to the tubulin family. Dimer of alpha and beta chains. A typical microtubule is a hollow water-filled tube with an outer diameter of 25 nm and an inner diameter of 15 nM. Alpha-beta heterodimers associate head-to-tail to form protofilaments running lengthwise along the microtubule wall with the beta-tubulin subunit facing the microtubule plus end conferring a structural polarity. Microtubules usually have 13 protofilaments but different protofilament numbers can be found in some organisms and specialized cells. Mg(2+) is required as a cofactor.

It localises to the cytoplasm. The protein resides in the cytoskeleton. Functionally, tubulin is the major constituent of microtubules, a cylinder consisting of laterally associated linear protofilaments composed of alpha- and beta-tubulin heterodimers. Microtubules grow by the addition of GTP-tubulin dimers to the microtubule end, where a stabilizing cap forms. Below the cap, tubulin dimers are in GDP-bound state, owing to GTPase activity of alpha-tubulin. The polypeptide is Tubulin beta chain (Phytophthora cinnamomi (Cinnamon fungus)).